The chain runs to 940 residues: Isoleucine--tRNA ligase (940 aa).

The 'HIGH' region signature appears at 58–68 (PYANGSIHIGH). Residue Glu-564 participates in L-isoleucyl-5'-AMP binding. A 'KMSKS' region motif is present at residues 605–609 (KMSKS). Lys-608 provides a ligand contact to ATP. Residues Cys-903, Cys-906, Cys-923, and Cys-926 each contribute to the Zn(2+) site.

It belongs to the class-I aminoacyl-tRNA synthetase family. IleS type 1 subfamily. Monomer. The cofactor is Zn(2+).

Its subcellular location is the cytoplasm. The enzyme catalyses tRNA(Ile) + L-isoleucine + ATP = L-isoleucyl-tRNA(Ile) + AMP + diphosphate. In terms of biological role, catalyzes the attachment of isoleucine to tRNA(Ile). As IleRS can inadvertently accommodate and process structurally similar amino acids such as valine, to avoid such errors it has two additional distinct tRNA(Ile)-dependent editing activities. One activity is designated as 'pretransfer' editing and involves the hydrolysis of activated Val-AMP. The other activity is designated 'posttransfer' editing and involves deacylation of mischarged Val-tRNA(Ile). The polypeptide is Isoleucine--tRNA ligase (Shewanella sp. (strain MR-4)).